The chain runs to 35 residues: Photosystem II reaction center protein T (35 aa).

The helical transmembrane segment at 3–23 threads the bilayer; the sequence is ALVYTFLLVSTLGIIFFAIFF.

Belongs to the PsbT family. As to quaternary structure, PSII is composed of 1 copy each of membrane proteins PsbA, PsbB, PsbC, PsbD, PsbE, PsbF, PsbH, PsbI, PsbJ, PsbK, PsbL, PsbM, PsbT, PsbY, PsbZ, Psb30/Ycf12, at least 3 peripheral proteins of the oxygen-evolving complex and a large number of cofactors. It forms dimeric complexes.

It localises to the plastid. The protein resides in the chloroplast thylakoid membrane. In terms of biological role, found at the monomer-monomer interface of the photosystem II (PS II) dimer, plays a role in assembly and dimerization of PSII. PSII is a light-driven water plastoquinone oxidoreductase, using light energy to abstract electrons from H(2)O, generating a proton gradient subsequently used for ATP formation. This is Photosystem II reaction center protein T from Gossypium barbadense (Sea Island cotton).